Reading from the N-terminus, the 276-residue chain is uncharacterized protein (276 aa).

A propeptide spans 1 to 4 (MNRG) (leader sequence). Met-5 carries the post-translational modification N-methylmethionine. A helical membrane pass occupies residues 5–26 (MTLIELLVALALSIILSLGLYY).

It localises to the membrane. This is an uncharacterized protein from Aquifex aeolicus (strain VF5).